We begin with the raw amino-acid sequence, 417 residues long: Serine hydroxymethyltransferase 2 (417 aa).

Residues Leu121 and 125–127 (GHL) each bind (6S)-5,6,7,8-tetrahydrofolate. Lys229 bears the N6-(pyridoxal phosphate)lysine mark. 354–356 (SPF) contributes to the (6S)-5,6,7,8-tetrahydrofolate binding site.

This sequence belongs to the SHMT family. In terms of assembly, homodimer. It depends on pyridoxal 5'-phosphate as a cofactor.

It is found in the cytoplasm. The catalysed reaction is (6R)-5,10-methylene-5,6,7,8-tetrahydrofolate + glycine + H2O = (6S)-5,6,7,8-tetrahydrofolate + L-serine. The protein operates within one-carbon metabolism; tetrahydrofolate interconversion. Its pathway is amino-acid biosynthesis; glycine biosynthesis; glycine from L-serine: step 1/1. Catalyzes the reversible interconversion of serine and glycine with tetrahydrofolate (THF) serving as the one-carbon carrier. This reaction serves as the major source of one-carbon groups required for the biosynthesis of purines, thymidylate, methionine, and other important biomolecules. Also exhibits THF-independent aldolase activity toward beta-hydroxyamino acids, producing glycine and aldehydes, via a retro-aldol mechanism. This chain is Serine hydroxymethyltransferase 2, found in Pseudomonas putida (strain ATCC 47054 / DSM 6125 / CFBP 8728 / NCIMB 11950 / KT2440).